The chain runs to 73 residues: Large ribosomal subunit protein bL31 (73 aa).

Belongs to the bacterial ribosomal protein bL31 family. Type A subfamily. Part of the 50S ribosomal subunit.

Binds the 23S rRNA. The chain is Large ribosomal subunit protein bL31 from Mesorhizobium japonicum (strain LMG 29417 / CECT 9101 / MAFF 303099) (Mesorhizobium loti (strain MAFF 303099)).